We begin with the raw amino-acid sequence, 127 residues long: Protein HI_1253 (127 aa).

Transmembrane regions (helical) follow at residues 13 to 33 (VIML…LLVI), 61 to 81 (LIVS…WWLV), 82 to 102 (AKFA…SKKV), and 107 to 127 (SIFF…AYLK).

The protein belongs to the SirB2 family.

Its subcellular location is the cell inner membrane. The protein is Protein HI_1253 of Haemophilus influenzae (strain ATCC 51907 / DSM 11121 / KW20 / Rd).